Consider the following 181-residue polypeptide: Probable nicotinate-nucleotide adenylyltransferase (181 aa).

This sequence belongs to the NadD family.

The catalysed reaction is nicotinate beta-D-ribonucleotide + ATP + H(+) = deamido-NAD(+) + diphosphate. Its pathway is cofactor biosynthesis; NAD(+) biosynthesis; deamido-NAD(+) from nicotinate D-ribonucleotide: step 1/1. Catalyzes the reversible adenylation of nicotinate mononucleotide (NaMN) to nicotinic acid adenine dinucleotide (NaAD). The polypeptide is Probable nicotinate-nucleotide adenylyltransferase (Campylobacter fetus subsp. fetus (strain 82-40)).